We begin with the raw amino-acid sequence, 167 residues long: Minor fimbrial protein PrsF (167 aa).

The first 18 residues, 1 to 18, serve as a signal peptide directing secretion; it reads MIRLSLFISLLLTSVAVL.

It localises to the secreted. The protein resides in the fimbrium. Fimbriae (also called pili), polar filaments radiating from the surface of the bacterium to a length of 0.5-1.5 micrometers and numbering 100-300 per cell, enable bacteria to colonize the epithelium of specific host organs. The protein is Minor fimbrial protein PrsF (prsF) of Escherichia coli.